Reading from the N-terminus, the 257-residue chain is Phycoerythrobilin:ferredoxin oxidoreductase (257 aa).

The protein belongs to the HY2 family.

The enzyme catalyses (3Z)-phycoerythrobilin + oxidized 2[4Fe-4S]-[ferredoxin] = 15,16-dihydrobiliverdin + reduced 2[4Fe-4S]-[ferredoxin] + 2 H(+). Its function is as follows. Catalyzes the two-electron reduction of the C2 and C3(1) diene system of 15,16-dihydrobiliverdin. The protein is Phycoerythrobilin:ferredoxin oxidoreductase (pebB) of Synechococcus sp. (strain WH8020).